Here is a 314-residue protein sequence, read N- to C-terminus: Porphobilinogen deaminase (314 aa).

Cys-249 carries the post-translational modification S-(dipyrrolylmethanemethyl)cysteine.

This sequence belongs to the HMBS family. As to quaternary structure, monomer. Dipyrromethane serves as cofactor.

The enzyme catalyses 4 porphobilinogen + H2O = hydroxymethylbilane + 4 NH4(+). It participates in porphyrin-containing compound metabolism; protoporphyrin-IX biosynthesis; coproporphyrinogen-III from 5-aminolevulinate: step 2/4. In terms of biological role, tetrapolymerization of the monopyrrole PBG into the hydroxymethylbilane pre-uroporphyrinogen in several discrete steps. The polypeptide is Porphobilinogen deaminase (Brucella suis biovar 1 (strain 1330)).